The chain runs to 698 residues: Transcription factor cwo (698 aa).

Positions 62–75 (QDPLSHRIIEKRRR) are basic motif; degenerate. In terms of domain architecture, bHLH spans 62-117 (QDPLSHRIIEKRRRDRMNSCLADLSRLIPPQYQRKGRGRIEKTEIIEMAIRHLKHL). Residues 76–117 (DRMNSCLADLSRLIPPQYQRKGRGRIEKTEIIEMAIRHLKHL) form a helix-loop-helix motif region. An Orange domain is found at 128–159 (YRSGYMDCMKEAAKFLYDVHMQDFCHRLLGRL). Disordered regions lie at residues 257–319 (SSPA…ASST) and 349–369 (STAP…FESS). A compositionally biased stretch (low complexity) spans 280–318 (APPAADNVPSNSTGSGSAAACAGGNSNSSGSNSSNAASS). A compositionally biased stretch (basic and acidic residues) spans 359-369 (TDSSHHDFESS).

Expressed in adult brain where it is detected in the dorsal lateral neurons, small and large ventral lateral neurons and dorsal neurons 1, 2 and 3 (at protein level). Expressed at constant levels in a 12 hour light / 12 hour day cycle (at protein level). Strongly expressed in pacemaker neurons. In adults, mRNA expression oscillates in a circadian manner with a peak at around 14 hour Zeitgeber time. mRNA levels oscillate in a rhythmic manner in both 12 hour light / 12 hour dark and constant dark conditions with a morning peak around the time of lights-on and an evening peak around the time of lights-off in light/dark conditions. During stage 8 of embryonic development, expressed in the anterior and posterior midgut primordia and expression in the gut continues throughout embryonic development. During germ band retraction, expression is initiated in many tissues in a prominent segmentally repeated pattern. Later, expression is ubiquitous but has higher levels in segmentally repeated clusters of cells. Expression is also found in cells of the amnioserosa, in the head region, in posterior spiracles and in tracheal trees.

Its subcellular location is the nucleus. In terms of biological role, plays a role in the regulation of circadian rhythms. Transcriptional repressor which inhibits Clock-mediated transcriptional activation by binding to E boxes in the promoters of Clock target genes and repressing their transcription. E box binding activity is time-dependent with higher binding activity seen in the early morning (zeitgeber time 2) than early evening (zeitgeber time 14) and is dependent on the presence of the circadian protein per. It is likely that per binds to Clock-cycle heterodimers, reducing their affinity for E box binding and allowing cwo to bind instead. Negatively regulates its own expression. This chain is Transcription factor cwo, found in Drosophila melanogaster (Fruit fly).